The chain runs to 152 residues: Deoxyuridine 5'-triphosphate nucleotidohydrolase (152 aa).

Substrate-binding positions include 71 to 73 (RSG), Asn84, 88 to 90 (LID), and Met98.

Belongs to the dUTPase family. Mg(2+) serves as cofactor.

It carries out the reaction dUTP + H2O = dUMP + diphosphate + H(+). The protein operates within pyrimidine metabolism; dUMP biosynthesis; dUMP from dCTP (dUTP route): step 2/2. In terms of biological role, this enzyme is involved in nucleotide metabolism: it produces dUMP, the immediate precursor of thymidine nucleotides and it decreases the intracellular concentration of dUTP so that uracil cannot be incorporated into DNA. This is Deoxyuridine 5'-triphosphate nucleotidohydrolase from Serratia proteamaculans (strain 568).